The sequence spans 976 residues: Chloride channel protein 1 (976 aa).

Residues 1 to 118 (MQPSQSLRRG…VVRRKLGEDW (118 aa)) lie on the Cytoplasmic side of the membrane. The tract at residues 71 to 92 (DKEQDTGMSKKMGSSESMDSKD) is disordered. Residues 77–87 (GMSKKMGSSES) are compositionally biased toward low complexity. A helical transmembrane segment spans residues 119–150 (IFLVLLGLLMALVSWSMDYVSAKSLQAYKWSY). Residues 151–158 (YQMQPNLP) lie on the Extracellular side of the membrane. The helical transmembrane segment at 159–179 (LQYLVWVTFPLTLILFSAVFC) threads the bilayer. Residues 180–183 (HLIS) are Cytoplasmic-facing. The segment at residues 184 to 189 (PQAVGS) is an intramembrane region (note=Loop between two helices). Positions 188-192 (GSGIP) match the Selectivity filter part_1 motif. Serine 189 lines the chloride pocket. The segment at residues 190-195 (GIPEMK) is an intramembrane region (helical). At 196 to 208 (TILRGVILKEYLT) the chain is on the cytoplasmic side. An intramembrane region (helical) is located at residues 209-224 (LKAFVAKVVALTAGLG). The note=Loop between two helices intramembrane region spans 225-230 (SGIPVG). A Selectivity filter part_2 motif is present at residues 230 to 234 (GKEGP). An intramembrane region (helical) is located at residues 231–246 (KEGPFVHIASICAAVL). Topologically, residues 247–268 (SKFMSMFCGVYEQPYYYTDMLT) are cytoplasmic. Intramembrane regions (helical) lie at residues 269–280 (VGCAVGVGCCFG) and 281–290 (TPLGGVLFSI). The Cytoplasmic segment spans residues 291–301 (EVTSTYFAVRN). Residues 302-321 (YWRGFFAATFSAFVFRVLAV) form a helical membrane-spanning segment. The Extracellular portion of the chain corresponds to 322–347 (WNKDAVTITALFRTNFRMDFPFDLQE). Residues 348–376 (LPAFAIIGICCGFLGAVFVYLHRQVMLGV) traverse the membrane as a helical segment. The Cytoplasmic segment spans residues 377–390 (RKHKALSQFLAKHR). A helical transmembrane segment spans residues 391–408 (LLYPGIVTFIIASFTFPP). Over 409–414 (GIGQFM) the chain is Extracellular. An intramembrane region (note=Loop between two helices) is located at residues 415–418 (AGEL). Residues 419–426 (MPREAIST) constitute an intramembrane region (helical). Residues 427 to 457 (LFDNNTWVKHVGDPESLGRSAVWIHPRVNVI) lie on the Extracellular side of the membrane. The helical intramembrane region spans 458–475 (IIIFLFFIMKFWMSIVAT). The segment at residues 476–482 (TMPIPCG) is an intramembrane region (note=Loop between two helices). Residues 482–486 (GGFMP) carry the Selectivity filter part_3 motif. Positions 483–498 (GFMPVFVLGAAFGRLV) form an intramembrane region, helical. Phenylalanine 484 serves as a coordination point for chloride. Topologically, residues 499-521 (GEIMAMLFPDGILFDDIIYKILP) are extracellular. Residues 522–538 (GGYAVIGAAALTGAVSH) constitute an intramembrane region (helical). An intramembrane region (note=Loop between two helices) is located at residues 539–540 (TV). Residues 541–554 (STAVICFELTGQIA) constitute an intramembrane region (helical). Residues 555–557 (HIL) lie on the Extracellular side of the membrane. The helical intramembrane region spans 558-571 (PMMVAVILANMVAQ). Residues 572–575 (SLQP) constitute an intramembrane region (note=Loop between two helices). An intramembrane region (helical) is located at residues 576–578 (SLY). Tyrosine 578 contributes to the chloride binding site. Over 579 to 976 (DSIIQVKKLP…DEEDEDELIL (398 aa)) the chain is Cytoplasmic. The 60-residue stretch at 609–668 (MVRDVKFVSATCTYGELRTLLQTTTVKTLPLVDSKDSMILLGSVERSELQSLLQRHLGPE) folds into the CBS 1 domain. Residues 707-759 (DEDEDEDLSGKPELPPLPPPHPLPSAPLSSEESNGPLPSHKQQPEAPEPADQR) form a disordered region. A compositionally biased stretch (pro residues) spans 719-731 (ELPPLPPPHPLPS). The CBS 2 domain maps to 816–871 (IDQSPFQLVEQTSLHKTHTLFSLLGLHLAYVTSMGKLRGVLALEELQKAIEGHTKS). Positions 872–976 (GVQLRPPLAS…DEEDEDELIL (105 aa)) are disordered. A Phosphoserine modification is found at serine 881. Over residues 914–925 (SPEPPAPSPSPA) the composition is skewed to pro residues. Composition is skewed to acidic residues over residues 938 to 955 (ELEE…EELA) and 967 to 976 (DEEDEDELIL).

The protein belongs to the chloride channel (TC 2.A.49) family. ClC-1/CLCN1 subfamily. As to quaternary structure, homodimer.

Its subcellular location is the cell membrane. It is found in the sarcolemma. It localises to the T-tubule. It catalyses the reaction chloride(in) = chloride(out). The enzyme catalyses thiocyanate(in) = thiocyanate(out). It carries out the reaction bromide(in) = bromide(out). The catalysed reaction is nitrate(in) = nitrate(out). It catalyses the reaction iodide(out) = iodide(in). With respect to regulation, modulated by membrane voltage with depolarization favouring channel opening and hyperpolarization favouring channel closure. Inhibited by acidic pH and ATP binding due to a shift of voltage dependence of common gating to more positive voltages. Inhibited by 9-anthracene-carboxylic. Functionally, voltage-gated chloride channel involved in skeletal muscle excitability. Generates most of the plasma membrane chloride conductance in skeletal muscle fibers, stabilizes the resting membrane potential and contributes to the repolarization phase during action potential firing. Forms a homodimeric channel where each subunit has its own ion conduction pathway. Conducts double-barreled currents controlled by two types of gates, two fast glutamate gates that control each subunit independently and a slow common gate that opens and shuts off both subunits simultaneously. Has a significant open probability at muscle resting potential and is further activated upon membrane depolarization. Permeable to small monovalent anions with ion selectivity for chloride &gt; thiocyanate &gt; bromide &gt; nitrate &gt; iodide. The sequence is that of Chloride channel protein 1 (CLCN1) from Canis lupus familiaris (Dog).